Reading from the N-terminus, the 209-residue chain is Kynurenine formamidase (209 aa).

Residue tryptophan 19 coordinates substrate. Zn(2+)-binding residues include histidine 49, histidine 53, and aspartate 55. Histidine 59 serves as the catalytic Proton donor/acceptor. 2 residues coordinate Zn(2+): histidine 160 and glutamate 172.

Belongs to the Cyclase 1 superfamily. KynB family. As to quaternary structure, homodimer. Requires Zn(2+) as cofactor.

The catalysed reaction is N-formyl-L-kynurenine + H2O = L-kynurenine + formate + H(+). It participates in amino-acid degradation; L-tryptophan degradation via kynurenine pathway; L-kynurenine from L-tryptophan: step 2/2. Catalyzes the hydrolysis of N-formyl-L-kynurenine to L-kynurenine, the second step in the kynurenine pathway of tryptophan degradation. This Ralstonia pickettii (strain 12J) protein is Kynurenine formamidase.